Consider the following 412-residue polypeptide: CHRNA7-FAM7A fusion protein (412 aa).

Helical transmembrane passes span Gly-144 to Leu-164, Ile-172 to Ile-192, Gln-205 to Leu-225, Trp-240 to Arg-254, and Leu-380 to Ala-400.

This sequence belongs to the ligand-gated ion channel (TC 1.A.9) family. In terms of tissue distribution, expressed in hippocampus.

It localises to the membrane. This Homo sapiens (Human) protein is CHRNA7-FAM7A fusion protein (CHRFAM7A).